A 257-amino-acid polypeptide reads, in one-letter code: Global transcriptional regulator CodY (257 aa).

A GAF domain region spans residues M1–L155. Residues A203–R222 constitute a DNA-binding region (H-T-H motif).

The protein belongs to the CodY family.

Its subcellular location is the cytoplasm. Functionally, DNA-binding global transcriptional regulator which is involved in the adaptive response to starvation and acts by directly or indirectly controlling the expression of numerous genes in response to nutrient availability. During rapid exponential growth, CodY is highly active and represses genes whose products allow adaptation to nutrient depletion. The sequence is that of Global transcriptional regulator CodY from Staphylococcus aureus (strain bovine RF122 / ET3-1).